A 246-amino-acid polypeptide reads, in one-letter code: Protein lin-37 homolog (246 aa).

Met-1 is modified (N-acetylmethionine). Glycyl lysine isopeptide (Lys-Gly) (interchain with G-Cter in SUMO2) cross-links involve residues Lys-5 and Lys-7. The segment covering 36-55 (DRERLDEEPGKTSLDTHNKD) has biased composition (basic and acidic residues). 2 disordered regions span residues 36 to 90 (DRER…GGPQ) and 127 to 209 (PTVR…LIYR). 2 positions are modified to phosphoserine: Ser-135 and Ser-138. Residues 163–172 (LPPPTAPGPP) show a composition bias toward pro residues. Thr-167 is modified (phosphothreonine). A phosphoserine mark is found at Ser-182 and Ser-202.

Component of the DREAM complex (also named LINC complex) at least composed of E2F4, E2F5, LIN9, LIN37, LIN52, LIN54, MYBL1, MYBL2, RBL1, RBL2, RBBP4, TFDP1 and TFDP2. The complex exists in quiescent cells where it represses cell cycle-dependent genes. It dissociates in S phase when LIN9, LIN37, LIN52 and LIN54 form a subcomplex that binds to MYBL2.

The sequence is that of Protein lin-37 homolog (LIN37) from Bos taurus (Bovine).